The sequence spans 188 residues: Elongation factor P (188 aa).

It belongs to the elongation factor P family.

Its subcellular location is the cytoplasm. Its pathway is protein biosynthesis; polypeptide chain elongation. Its function is as follows. Involved in peptide bond synthesis. Stimulates efficient translation and peptide-bond synthesis on native or reconstituted 70S ribosomes in vitro. Probably functions indirectly by altering the affinity of the ribosome for aminoacyl-tRNA, thus increasing their reactivity as acceptors for peptidyl transferase. The chain is Elongation factor P from Streptomyces coelicolor (strain ATCC BAA-471 / A3(2) / M145).